The chain runs to 130 residues: Small ribosomal subunit protein uS9 (130 aa).

The disordered stretch occupies residues 109–130 (RKKERKKYGQRAARARYQYSKR).

The protein belongs to the universal ribosomal protein uS9 family.

The chain is Small ribosomal subunit protein uS9 from Nitratidesulfovibrio vulgaris (strain DSM 19637 / Miyazaki F) (Desulfovibrio vulgaris).